We begin with the raw amino-acid sequence, 506 residues long: Cysteine--tRNA ligase (506 aa).

Cys34 provides a ligand contact to Zn(2+). A 'HIGH' region motif is present at residues 36-46 (PTVYDFAHIGN). Zn(2+) contacts are provided by Cys230, His269, and Glu273. The 'KMSKS' region motif lies at 302 to 306 (KMSKS). Lys305 serves as a coordination point for ATP.

Belongs to the class-I aminoacyl-tRNA synthetase family. As to quaternary structure, monomer. Zn(2+) is required as a cofactor.

The protein localises to the cytoplasm. The catalysed reaction is tRNA(Cys) + L-cysteine + ATP = L-cysteinyl-tRNA(Cys) + AMP + diphosphate. In Brucella ovis (strain ATCC 25840 / 63/290 / NCTC 10512), this protein is Cysteine--tRNA ligase.